A 271-amino-acid chain; its full sequence is tRNA pseudouridine synthase A (271 aa).

The Nucleophile role is filled by Asp54. Tyr112 is a substrate binding site.

It belongs to the tRNA pseudouridine synthase TruA family. In terms of assembly, homodimer.

It catalyses the reaction uridine(38/39/40) in tRNA = pseudouridine(38/39/40) in tRNA. Its function is as follows. Formation of pseudouridine at positions 38, 39 and 40 in the anticodon stem and loop of transfer RNAs. This Acinetobacter baylyi (strain ATCC 33305 / BD413 / ADP1) protein is tRNA pseudouridine synthase A.